The sequence spans 550 residues: Protein UshA (550 aa).

Residues 1 to 25 form the signal peptide; that stretch reads MKFLKRGVALALLAAFALTTQPAQA. Zn(2+) is bound by residues D41, H43, D84, N116, H217, H252, and Q254. The cysteines at positions 258 and 275 are disulfide-linked. Residues F429 and 498-504 each bind substrate; that span reads FNATGGD.

It belongs to the 5'-nucleotidase family. In terms of assembly, monomer. Requires Zn(2+) as cofactor.

It localises to the periplasm. The catalysed reaction is UDP-sugar + H2O = UMP + alpha-D-aldose 1-phosphate.. It catalyses the reaction a ribonucleoside 5'-phosphate + H2O = a ribonucleoside + phosphate. Its function is as follows. Degradation of external UDP-glucose to uridine monophosphate and glucose-1-phosphate, which can then be used by the cell. This chain is Protein UshA (ushA), found in Salmonella pullorum.